A 76-amino-acid polypeptide reads, in one-letter code: Small ribosomal subunit protein bS18 (76 aa).

The protein belongs to the bacterial ribosomal protein bS18 family. As to quaternary structure, part of the 30S ribosomal subunit. Forms a tight heterodimer with protein bS6.

Its function is as follows. Binds as a heterodimer with protein bS6 to the central domain of the 16S rRNA, where it helps stabilize the platform of the 30S subunit. The protein is Small ribosomal subunit protein bS18 of Psychrobacter arcticus (strain DSM 17307 / VKM B-2377 / 273-4).